The sequence spans 664 residues: Glycine--tRNA ligase beta subunit (664 aa).

Belongs to the class-II aminoacyl-tRNA synthetase family. In terms of assembly, tetramer of two alpha and two beta subunits.

It is found in the cytoplasm. It carries out the reaction tRNA(Gly) + glycine + ATP = glycyl-tRNA(Gly) + AMP + diphosphate. The protein is Glycine--tRNA ligase beta subunit of Rickettsia africae (strain ESF-5).